Consider the following 356-residue polypeptide: UDP-N-acetylglucosamine--N-acetylmuramyl-(pentapeptide) pyrophosphoryl-undecaprenol N-acetylglucosamine transferase (356 aa).

Residues 11–13, Asn-123, Arg-159, and Ser-192 each bind UDP-N-acetyl-alpha-D-glucosamine; that span reads TAG.

The protein belongs to the glycosyltransferase 28 family. MurG subfamily.

It localises to the cell membrane. It catalyses the reaction di-trans,octa-cis-undecaprenyl diphospho-N-acetyl-alpha-D-muramoyl-L-alanyl-D-glutamyl-meso-2,6-diaminopimeloyl-D-alanyl-D-alanine + UDP-N-acetyl-alpha-D-glucosamine = di-trans,octa-cis-undecaprenyl diphospho-[N-acetyl-alpha-D-glucosaminyl-(1-&gt;4)]-N-acetyl-alpha-D-muramoyl-L-alanyl-D-glutamyl-meso-2,6-diaminopimeloyl-D-alanyl-D-alanine + UDP + H(+). Its pathway is cell wall biogenesis; peptidoglycan biosynthesis. Its function is as follows. Cell wall formation. Catalyzes the transfer of a GlcNAc subunit on undecaprenyl-pyrophosphoryl-MurNAc-pentapeptide (lipid intermediate I) to form undecaprenyl-pyrophosphoryl-MurNAc-(pentapeptide)GlcNAc (lipid intermediate II). The polypeptide is UDP-N-acetylglucosamine--N-acetylmuramyl-(pentapeptide) pyrophosphoryl-undecaprenol N-acetylglucosamine transferase (Tropheryma whipplei (strain Twist) (Whipple's bacillus)).